Here is a 244-residue protein sequence, read N- to C-terminus: Ferredoxin--NADP reductase B (244 aa).

An FAD-binding FR-type domain is found at 4 to 106; it reads AEPFEARLVA…VGPHGLFTRD (103 aa). FAD-binding positions include 55–58 and threonine 120; that span reads RAYS.

Belongs to the ferredoxin--NADP reductase type 1 family. Requires FAD as cofactor.

It carries out the reaction 2 reduced [4Fe-4S]-[ferredoxin] + NADP(+) + H(+) = 2 oxidized [4Fe-4S]-[ferredoxin] + NADPH. Transports electrons between NADPH and ferredoxin. Can transfer electrons to ferredoxins Fdx2 and Fdx8. Prefers NADPH to NADH. This Sorangium cellulosum (strain So ce56) (Polyangium cellulosum (strain So ce56)) protein is Ferredoxin--NADP reductase B.